A 439-amino-acid polypeptide reads, in one-letter code: Chromosomal replication initiator protein DnaA (439 aa).

Residues 1–75 (MESWSRCLER…GIREVVLAIG (75 aa)) are domain I, interacts with DnaA modulators. Residues 75 to 101 (GSRPKTTELPVPVDTTGRLSSTVPFNG) are domain II. A domain III, AAA+ region region spans residues 102–319 (NLDTHYNFDN…GALNTLVARA (218 aa)). 4 residues coordinate ATP: Gly147, Gly149, Lys150, and Thr151. Positions 320–439 (NFTGRAVTIE…WDKLMRKFSE (120 aa)) are domain IV, binds dsDNA.

This sequence belongs to the DnaA family. In terms of assembly, oligomerizes as a right-handed, spiral filament on DNA at oriC.

The protein localises to the cytoplasm. Plays an essential role in the initiation and regulation of chromosomal replication. ATP-DnaA binds to the origin of replication (oriC) to initiate formation of the DNA replication initiation complex once per cell cycle. Binds the DnaA box (a 9 base pair repeat at the origin) and separates the double-stranded (ds)DNA. Forms a right-handed helical filament on oriC DNA; dsDNA binds to the exterior of the filament while single-stranded (ss)DNA is stabiized in the filament's interior. The ATP-DnaA-oriC complex binds and stabilizes one strand of the AT-rich DNA unwinding element (DUE), permitting loading of DNA polymerase. After initiation quickly degrades to an ADP-DnaA complex that is not apt for DNA replication. Binds acidic phospholipids. The sequence is that of Chromosomal replication initiator protein DnaA from Xylella fastidiosa (strain 9a5c).